Reading from the N-terminus, the 1024-residue chain is Beta-galactosidase (1024 aa).

Residues Asn103 and Asp202 each contribute to the substrate site. A Na(+)-binding site is contributed by Asp202. Mg(2+)-binding residues include Glu417, His419, and Glu462. Substrate contacts are provided by residues Glu462 and 538 to 541 (EYAH). Catalysis depends on Glu462, which acts as the Proton donor. The Nucleophile role is filled by Glu538. Asn598 serves as a coordination point for Mg(2+). Na(+) is bound by residues Phe602 and Asn605. Substrate contacts are provided by Asn605 and Trp1000.

This sequence belongs to the glycosyl hydrolase 2 family. Homotetramer. Mg(2+) is required as a cofactor. Na(+) serves as cofactor.

It catalyses the reaction Hydrolysis of terminal non-reducing beta-D-galactose residues in beta-D-galactosides.. The sequence is that of Beta-galactosidase from Escherichia coli O139:H28 (strain E24377A / ETEC).